Here is a 302-residue protein sequence, read N- to C-terminus: Tegument protein VP22 (302 aa).

Residues 1–10 show a composition bias toward basic and acidic residues; it reads MASSDGDRLC. Disordered stretches follow at residues 1 to 42 and 125 to 167; these read MASS…PDDS and SFTK…TATS. Positions 154-244 are interaction with gE; that stretch reads RPISFSTAPK…ANEADLGEGA (91 aa). The segment covering 157-167 has biased composition (polar residues); sequence SFSTAPKTATS. The Nuclear export signal signature appears at 212 to 224; the sequence is LDRLLTGAVIRIT. Positions 243–302 are disordered; it reads GASVSKRGHNRKTGDLQGGMGNEPMYAQVRKPKSRTDTQTTGRITNRSRARSASRTDARK.

This sequence belongs to the alphaherpesvirinae VP22 tegument protein family. In terms of assembly, interacts with gE (via C-terminus); this interaction is necessary for the recruitment of VP22/ORF9 to the Golgi and its packaging into virions. Interacts with gM (via C-terminus). Interacts with VP16/ORF10; this interaction allows the formation of a tripartite complex composed of VP16/ORF10, VP22/ORF9 and VHS/ORF17. Interacts with the capsid-binding protein ORF44. Interacts with host CGAS. In terms of processing, highly phosphorylated in the host cell. Packaging is selective for underphosphorylated forms.

The protein resides in the virion tegument. It is found in the host cytoplasm. It localises to the host nucleus. The protein localises to the host Golgi apparatus. In terms of biological role, tegument protein that plays different roles during the time course of infection. Participates in both the accumulation of viral mRNAs and viral protein translation at late time of infection. Modulates the RNase activity of the virion host shutoff protein ORF17 probably to ensure necessary levels of key cellular mRNAs and proteins. Plays a role in microtubule reorganization that occurs after viral infection by stabilizing microtubule network. Plays a role in the inhibition of host innate immune system by targeting the CGAS enzymatic activity which is the principal cytosolic DNA sensor that detects invading viral DNA. Acts by mediating disruption of liquid-like droplets in which CGAS is activated, thereby preventing CGAS activity. The sequence is that of Tegument protein VP22 from Varicella-zoster virus (strain Oka vaccine) (HHV-3).